The following is a 104-amino-acid chain: Class I hydrophobin 12 (104 aa).

A signal peptide spans M1–S25. Intrachain disulfides connect C27-C85, C34-C79, C35-C67, and C86-C99.

This sequence belongs to the fungal hydrophobin family. In terms of assembly, self-assembles to form functional amyloid fibrils called rodlets. Self-assembly into fibrillar rodlets occurs spontaneously at hydrophobic:hydrophilic interfaces and the rodlets further associate laterally to form amphipathic monolayers.

It is found in the secreted. The protein resides in the cell wall. Aerial growth, conidiation, and dispersal of filamentous fungi in the environment rely upon a capability of their secreting small amphipathic proteins called hydrophobins (HPBs) with low sequence identity. Class I can self-assemble into an outermost layer of rodlet bundles on aerial cell surfaces, conferring cellular hydrophobicity that supports fungal growth, development and dispersal; whereas Class II form highly ordered films at water-air interfaces through intermolecular interactions but contribute nothing to the rodlet structure. Hydph12 is a class I hydrophobin involved in the formation of mycelium knots. The chain is Class I hydrophobin 12 from Pleurotus ostreatus (strain PC15) (Oyster mushroom).